The primary structure comprises 305 residues: UDP-N-acetylenolpyruvoylglucosamine reductase (305 aa).

The 180-residue stretch at 35 to 214 folds into the FAD-binding PCMH-type domain; sequence VGGPAQALFT…RARMNEVQAH (180 aa). The active site involves Arg179. Ser228 serves as the catalytic Proton donor. Residue Glu298 is part of the active site.

It belongs to the MurB family. The cofactor is FAD.

It is found in the cytoplasm. The catalysed reaction is UDP-N-acetyl-alpha-D-muramate + NADP(+) = UDP-N-acetyl-3-O-(1-carboxyvinyl)-alpha-D-glucosamine + NADPH + H(+). It functions in the pathway cell wall biogenesis; peptidoglycan biosynthesis. Cell wall formation. The chain is UDP-N-acetylenolpyruvoylglucosamine reductase from Nitrobacter winogradskyi (strain ATCC 25391 / DSM 10237 / CIP 104748 / NCIMB 11846 / Nb-255).